We begin with the raw amino-acid sequence, 147 residues long: Fibromodulin (147 aa).

LRR repeat units follow at residues 1–15 (LDHN…PLPR), 16–37 (SLRE…ALEG), 40–61 (NLTA…MRGL), 63–84 (SLIL…LPSA), 85–105 (LEQL…YFRG), and 108–128 (KLLY…ASNT). N-linked (GlcNAc...) (keratan sulfate) asparagine glycosylation occurs at asparagine 5. N-linked (GlcNAc...) (keratan sulfate) asparagine glycosylation is present at asparagine 40. Asparagine 130 is a glycosylation site (N-linked (GlcNAc...) (keratan sulfate) asparagine). Residues 133-147 (SLLELDLSYNQLQKI) form an LRR 7 repeat.

The protein belongs to the small leucine-rich proteoglycan (SLRP) family. SLRP class II subfamily. As to quaternary structure, binds to type I and type II collagen. Post-translationally, binds keratan sulfate chains.

It is found in the secreted. The protein localises to the extracellular space. It localises to the extracellular matrix. Its function is as follows. Affects the rate of fibrils formation. May have a primary role in collagen fibrillogenesis. In Sus scrofa (Pig), this protein is Fibromodulin (FMOD).